The primary structure comprises 215 residues: MKPEQLVYLNPRQHRIYIASPLNEYMLSDYLKQRNLQTFAKTNIKVPADFGFYISKFVDLVSAVKAIHSVNIVHHNINPEDIFMTGPDFDLYVGGMFGSLYKTFIKNNPQNITLYAAPEQIKKVYTPKNDMYSLGIVLFELIMPFKTALERETTLTNFRNNVQQMPASLSQGHPKLTEIVCKLIQHDYSQRPDAEWLLKEMEQLLLEYTTCSKKL.

In terms of domain architecture, Protein kinase spans 1 to 205; the sequence is MKPEQLVYLN…WLLKEMEQLL (205 aa).

This sequence belongs to the protein kinase superfamily. Ser/Thr protein kinase family. As to quaternary structure, interacts with the kinase domain of host EIF2AK2.

The protein resides in the host cytoplasm. The catalysed reaction is L-seryl-[protein] + ATP = O-phospho-L-seryl-[protein] + ADP + H(+). It catalyses the reaction L-threonyl-[protein] + ATP = O-phospho-L-threonyl-[protein] + ADP + H(+). Functionally, plays a role in the inhibition of host eIF2alpha/EIF2S1 phosphorylation, thereby increasing viral fitness. In the insect host, targets the endogenous insect heme-regulated inhibitor (HRI)-like eIF2alpha kinase. This chain is Probable serine/threonine-protein kinase 2 (PK2), found in Autographa californica nuclear polyhedrosis virus (AcMNPV).